The chain runs to 267 residues: 4-hydroxy-tetrahydrodipicolinate reductase (267 aa).

Position 10–15 (10–15 (GAGGKM)) interacts with NAD(+). Arginine 38 contacts NADP(+). Residues 100–102 (GTT) and 126–129 (APNF) each bind NAD(+). Catalysis depends on histidine 156, which acts as the Proton donor/acceptor. Histidine 157 contributes to the (S)-2,3,4,5-tetrahydrodipicolinate binding site. Residue lysine 160 is the Proton donor of the active site. (S)-2,3,4,5-tetrahydrodipicolinate is bound at residue 166-167 (GT).

It belongs to the DapB family.

It localises to the cytoplasm. The enzyme catalyses (S)-2,3,4,5-tetrahydrodipicolinate + NAD(+) + H2O = (2S,4S)-4-hydroxy-2,3,4,5-tetrahydrodipicolinate + NADH + H(+). It carries out the reaction (S)-2,3,4,5-tetrahydrodipicolinate + NADP(+) + H2O = (2S,4S)-4-hydroxy-2,3,4,5-tetrahydrodipicolinate + NADPH + H(+). The protein operates within amino-acid biosynthesis; L-lysine biosynthesis via DAP pathway; (S)-tetrahydrodipicolinate from L-aspartate: step 4/4. Catalyzes the conversion of 4-hydroxy-tetrahydrodipicolinate (HTPA) to tetrahydrodipicolinate. The sequence is that of 4-hydroxy-tetrahydrodipicolinate reductase from Desulfitobacterium hafniense (strain DSM 10664 / DCB-2).